Reading from the N-terminus, the 89-residue chain is Small ribosomal subunit protein uS15 (89 aa).

It belongs to the universal ribosomal protein uS15 family. In terms of assembly, part of the 30S ribosomal subunit. Forms a bridge to the 50S subunit in the 70S ribosome, contacting the 23S rRNA.

Functionally, one of the primary rRNA binding proteins, it binds directly to 16S rRNA where it helps nucleate assembly of the platform of the 30S subunit by binding and bridging several RNA helices of the 16S rRNA. In terms of biological role, forms an intersubunit bridge (bridge B4) with the 23S rRNA of the 50S subunit in the ribosome. In Chlorobium phaeobacteroides (strain DSM 266 / SMG 266 / 2430), this protein is Small ribosomal subunit protein uS15.